Consider the following 310-residue polypeptide: Forkhead box protein pes-1 (310 aa).

Over residues Met1–Phe16 the composition is skewed to polar residues. 4 disordered regions span residues Met1 to Lys37, Val58 to Pro77, Lys92 to Asn126, and Ser217 to Ile242. Positions Pro17–Thr35 are enriched in low complexity. The segment at residues Arg128–Arg220 is a DNA-binding region (fork-head). Residues Leu218–Lys231 are compositionally biased toward basic residues.

The protein resides in the nucleus. The protein localises to the cytoplasm. Transcription factor. Plays a role in embryogenesis and later development, perhaps acting redundantly with forkhead protein fkh-2. The chain is Forkhead box protein pes-1 from Caenorhabditis briggsae.